The following is a 430-amino-acid chain: uncharacterized protein (430 aa).

The next 2 helical transmembrane spans lie at 20-40 and 405-425; these read YLCLVFLAVYYAYPLLFGIMP and YIWWALHISVCVLTILRLLVI.

It localises to the membrane. This is an uncharacterized protein from Schizosaccharomyces pombe (strain 972 / ATCC 24843) (Fission yeast).